The sequence spans 474 residues: Probable aspartate--tRNA ligase, cytoplasmic (474 aa).

Residue glutamate 203 participates in L-aspartate binding. The segment at glutamine 225 to lysine 228 is aspartate. Arginine 247 provides a ligand contact to L-aspartate. Residues arginine 247 to glutamate 249, arginine 255 to leucine 257, and glutamate 397 contribute to the ATP site. Residues serine 400 and arginine 404 each coordinate L-aspartate. Glycine 445–arginine 448 is a binding site for ATP.

This sequence belongs to the class-II aminoacyl-tRNA synthetase family. Type 2 subfamily. As to quaternary structure, homodimer.

It localises to the cytoplasm. The catalysed reaction is tRNA(Asp) + L-aspartate + ATP = L-aspartyl-tRNA(Asp) + AMP + diphosphate. This Enterocytozoon bieneusi (strain H348) (Microsporidian parasite) protein is Probable aspartate--tRNA ligase, cytoplasmic.